The primary structure comprises 330 residues: Anthranilate phosphoribosyltransferase (330 aa).

5-phospho-alpha-D-ribose 1-diphosphate is bound by residues glycine 75, 78–79, threonine 83, 85–88, 103–111, and alanine 115; these read GD, NVST, and KHGNRAASS. Anthranilate is bound at residue glycine 75. Serine 87 contributes to the Mg(2+) binding site. Asparagine 106 provides a ligand contact to anthranilate. Arginine 161 contacts anthranilate. Mg(2+)-binding residues include aspartate 220 and glutamate 221.

Belongs to the anthranilate phosphoribosyltransferase family. In terms of assembly, homodimer. Mg(2+) is required as a cofactor.

The enzyme catalyses N-(5-phospho-beta-D-ribosyl)anthranilate + diphosphate = 5-phospho-alpha-D-ribose 1-diphosphate + anthranilate. Its pathway is amino-acid biosynthesis; L-tryptophan biosynthesis; L-tryptophan from chorismate: step 2/5. Catalyzes the transfer of the phosphoribosyl group of 5-phosphorylribose-1-pyrophosphate (PRPP) to anthranilate to yield N-(5'-phosphoribosyl)-anthranilate (PRA). This chain is Anthranilate phosphoribosyltransferase, found in Novosphingobium aromaticivorans (strain ATCC 700278 / DSM 12444 / CCUG 56034 / CIP 105152 / NBRC 16084 / F199).